Consider the following 334-residue polypeptide: Ketol-acid reductoisomerase (NADP(+)) (334 aa).

The KARI N-terminal Rossmann domain occupies 2–181 (TKVYYDETVT…GATRAGVIET (180 aa)). Residues 25 to 28 (YGSQ), Arg48, Ser52, and 82 to 85 (DEIQ) contribute to the NADP(+) site. His107 is an active-site residue. Gly133 is an NADP(+) binding site. The KARI C-terminal knotted domain maps to 182–327 (TFKEETETDL…RELREMMPFI (146 aa)). The Mg(2+) site is built by Asp190, Glu194, Glu226, and Glu230. Ser251 is a binding site for substrate.

Belongs to the ketol-acid reductoisomerase family. It depends on Mg(2+) as a cofactor.

The enzyme catalyses (2R)-2,3-dihydroxy-3-methylbutanoate + NADP(+) = (2S)-2-acetolactate + NADPH + H(+). It carries out the reaction (2R,3R)-2,3-dihydroxy-3-methylpentanoate + NADP(+) = (S)-2-ethyl-2-hydroxy-3-oxobutanoate + NADPH + H(+). Its pathway is amino-acid biosynthesis; L-isoleucine biosynthesis; L-isoleucine from 2-oxobutanoate: step 2/4. It participates in amino-acid biosynthesis; L-valine biosynthesis; L-valine from pyruvate: step 2/4. Functionally, involved in the biosynthesis of branched-chain amino acids (BCAA). Catalyzes an alkyl-migration followed by a ketol-acid reduction of (S)-2-acetolactate (S2AL) to yield (R)-2,3-dihydroxy-isovalerate. In the isomerase reaction, S2AL is rearranged via a Mg-dependent methyl migration to produce 3-hydroxy-3-methyl-2-ketobutyrate (HMKB). In the reductase reaction, this 2-ketoacid undergoes a metal-dependent reduction by NADPH to yield (R)-2,3-dihydroxy-isovalerate. The sequence is that of Ketol-acid reductoisomerase (NADP(+)) from Staphylococcus epidermidis (strain ATCC 35984 / DSM 28319 / BCRC 17069 / CCUG 31568 / BM 3577 / RP62A).